Consider the following 483-residue polypeptide: Aspartyl/glutamyl-tRNA(Asn/Gln) amidotransferase subunit B (483 aa).

Belongs to the GatB/GatE family. GatB subfamily. Heterotrimer of A, B and C subunits.

It carries out the reaction L-glutamyl-tRNA(Gln) + L-glutamine + ATP + H2O = L-glutaminyl-tRNA(Gln) + L-glutamate + ADP + phosphate + H(+). The enzyme catalyses L-aspartyl-tRNA(Asn) + L-glutamine + ATP + H2O = L-asparaginyl-tRNA(Asn) + L-glutamate + ADP + phosphate + 2 H(+). Functionally, allows the formation of correctly charged Asn-tRNA(Asn) or Gln-tRNA(Gln) through the transamidation of misacylated Asp-tRNA(Asn) or Glu-tRNA(Gln) in organisms which lack either or both of asparaginyl-tRNA or glutaminyl-tRNA synthetases. The reaction takes place in the presence of glutamine and ATP through an activated phospho-Asp-tRNA(Asn) or phospho-Glu-tRNA(Gln). The polypeptide is Aspartyl/glutamyl-tRNA(Asn/Gln) amidotransferase subunit B (Brachyspira hyodysenteriae (strain ATCC 49526 / WA1)).